The primary structure comprises 88 residues: MANTTSAKKATRKIARRSAVNKARRSRIRSFVRKVEEAIASGDQALAAAALKAAQPELMRAATKGVMHSNTASRKVSRLAQRVKSLSA.

Disordered stretches follow at residues 1–23 and 65–88; these read MANTTSAKKATRKIARRSAVNKA and GVMHSNTASRKVSRLAQRVKSLSA.

This sequence belongs to the bacterial ribosomal protein bS20 family.

Functionally, binds directly to 16S ribosomal RNA. In Rhizobium meliloti (strain 1021) (Ensifer meliloti), this protein is Small ribosomal subunit protein bS20.